The primary structure comprises 475 residues: Putative response regulator NtrX-like (475 aa).

The region spanning 5–121 is the Response regulatory domain; that stretch reads DVLIVDDEES…KLVILLKRAC (117 aa). Asp54 is modified (4-aspartylphosphate). One can recognise a Sigma-54 factor interaction domain in the interval 143-369; it reads LVGGCSVTLK…LRNVVEWTLI (227 aa). ATP contacts are provided by residues 171-178 and 232-241; these read GKVGSGKE and ANNGTLYIDE.

Functionally, member of the two-component regulatory system RF_0895/RF_0427. In Rickettsia felis (strain ATCC VR-1525 / URRWXCal2) (Rickettsia azadi), this protein is Putative response regulator NtrX-like.